A 714-amino-acid polypeptide reads, in one-letter code: Hormonally up-regulated neu tumor-associated kinase (714 aa).

The segment covering 1-15 (MPAAAGDGLLGEPAA) has biased composition (low complexity). The disordered stretch occupies residues 1–26 (MPAAAGDGLLGEPAAPGGGGGAEDAA). The Protein kinase domain maps to 62-320 (LIGSRKLGEG…IQQALANRWL (259 aa)). ATP-binding positions include 68 to 76 (LGEGSFAKV) and Lys91. The active-site Proton acceptor is Asp186. The segment covering 437–461 (KKPKEQEKRGDFLHRPFSKKLDKNL) has biased composition (basic and acidic residues). Disordered stretches follow at residues 437 to 471 (KKPK…SGSL), 518 to 552 (MEFI…HKED), and 590 to 615 (ARRN…HTPL). Low complexity predominate over residues 599–611 (LSPGLPSGSMSPL).

Belongs to the protein kinase superfamily. CAMK Ser/Thr protein kinase family. SNF1 subfamily.

The catalysed reaction is L-seryl-[protein] + ATP = O-phospho-L-seryl-[protein] + ADP + H(+). It catalyses the reaction L-threonyl-[protein] + ATP = O-phospho-L-threonyl-[protein] + ADP + H(+). This Homo sapiens (Human) protein is Hormonally up-regulated neu tumor-associated kinase (HUNK).